The sequence spans 113 residues: Large ribosomal subunit protein bL17 (113 aa).

The protein belongs to the bacterial ribosomal protein bL17 family. As to quaternary structure, part of the 50S ribosomal subunit. Contacts protein L32.

This is Large ribosomal subunit protein bL17 from Clostridium tetani (strain Massachusetts / E88).